We begin with the raw amino-acid sequence, 532 residues long: Flavin-containing monooxygenase 1 (532 aa).

An N-acetylalanine modification is found at alanine 2. Topologically, residues 2–510 (AKRVAIVGAG…TRIVKESPSP (509 aa)) are lumenal. FAD contacts are provided by residues 9–13 (GAGVS), glutamate 32, 40–41 (LW), and 61–62 (NS). 60–61 (SN) contacts NADP(+). N-linked (GlcNAc...) (high mannose) asparagine glycosylation occurs at asparagine 120. 195-198 (SGTD) is a binding site for NADP(+). A helical membrane pass occupies residues 511–531 (FASLLKLFSFLALLVAIFQIF). Leucine 532 is a topological domain (cytoplasmic).

Belongs to the FMO family. The cofactor is FAD. In terms of tissue distribution, liver.

It localises to the endoplasmic reticulum membrane. The catalysed reaction is hypotaurine + NADPH + O2 + H(+) = taurine + NADP(+) + H2O. The enzyme catalyses hypotaurine + NADH + O2 + H(+) = taurine + NAD(+) + H2O. It catalyses the reaction trimethylamine + NADPH + O2 = trimethylamine N-oxide + NADP(+) + H2O. It carries out the reaction N,N-dimethylaniline + NADPH + O2 + H(+) = N,N-dimethylaniline N-oxide + NADP(+) + H2O. Functionally, broad spectrum monooxygenase that catalyzes the oxygenation of a wide variety of nitrogen- and sulfur-containing compounds including xenobiotics. Catalyzes the S-oxygenation of hypotaurine to produce taurine, an organic osmolyte involved in cell volume regulation as well as a variety of cytoprotective and developmental processes. In vitro, catalyzes the N-oxygenation of trimethylamine (TMA) to produce trimethylamine N-oxide (TMAO) and could therefore participate to the detoxification of this compound that is generated by the action of gut microbiota from dietary precursors such as choline, choline containing compounds, betaine or L-carnitine. In Sus scrofa (Pig), this protein is Flavin-containing monooxygenase 1 (FMO1).